Here is a 448-residue protein sequence, read N- to C-terminus: Carbamoyl phosphate synthase arginine-specific small chain (448 aa).

The transit peptide at 1–27 directs the protein to the mitochondrion; that stretch reads MFKNIARLASMARSAPRTTASFQTRFM. Positions 224–415 constitute a Glutamine amidotransferase type-1 domain; the sequence is HIAVIDCGVK…LGQVHQYRAA (192 aa). C304 (nucleophile) is an active-site residue. Catalysis depends on residues H388 and E390.

The protein belongs to the CarA family. Heterodimer composed of 2 chains; the small (or glutamine) chain promotes the hydrolysis of glutamine to ammonia, which is used by the large (or ammonia) chain to synthesize carbamoyl phosphate.

Its subcellular location is the mitochondrion matrix. The catalysed reaction is hydrogencarbonate + L-glutamine + 2 ATP + H2O = carbamoyl phosphate + L-glutamate + 2 ADP + phosphate + 2 H(+). It carries out the reaction L-glutamine + H2O = L-glutamate + NH4(+). The protein operates within amino-acid biosynthesis; L-arginine biosynthesis; carbamoyl phosphate from bicarbonate: step 1/1. Its function is as follows. Small subunit of the arginine-specific carbamoyl phosphate synthase (CPSase). CPSase catalyzes the formation of carbamoyl phosphate from the ammonia moiety of glutamine, carbonate, and phosphate donated by ATP, the first step of the arginine biosynthetic pathway. The small subunit (glutamine amidotransferase) binds and cleaves glutamine to supply the large subunit with the substrate ammonia. This is Carbamoyl phosphate synthase arginine-specific small chain (CPA1) from Yarrowia lipolytica (strain CLIB 122 / E 150) (Yeast).